Consider the following 175-residue polypeptide: Sec-independent protein translocase protein TatB (175 aa).

Residues 1-21 (MFDIGWSELVLIGVVALIAIG) form a helical membrane-spanning segment. Disordered stretches follow at residues 100–132 (KPAE…PTPE) and 155–175 (QAPV…AKAS). Residues 111–132 (EAPATSSEALTTPTTPEAPTPE) show a composition bias toward low complexity.

The protein belongs to the TatB family. As to quaternary structure, the Tat system comprises two distinct complexes: a TatABC complex, containing multiple copies of TatA, TatB and TatC subunits, and a separate TatA complex, containing only TatA subunits. Substrates initially bind to the TatABC complex, which probably triggers association of the separate TatA complex to form the active translocon.

The protein resides in the cell inner membrane. In terms of biological role, part of the twin-arginine translocation (Tat) system that transports large folded proteins containing a characteristic twin-arginine motif in their signal peptide across membranes. Together with TatC, TatB is part of a receptor directly interacting with Tat signal peptides. TatB may form an oligomeric binding site that transiently accommodates folded Tat precursor proteins before their translocation. In Bradyrhizobium diazoefficiens (strain JCM 10833 / BCRC 13528 / IAM 13628 / NBRC 14792 / USDA 110), this protein is Sec-independent protein translocase protein TatB.